A 701-amino-acid polypeptide reads, in one-letter code: MNETSNRDHQVTSKEILDVAFEKSKSKFTTPRQTIQDTEELQSYQQTKRKEFEQHINKNRLNLGQWTRYAKWEIENNHDFPRARSILERALDVNIQHVPFWIQYIQLELSHKNINHARNLMERAINTLPRVNKLWFLYVQTEEMLKNYPMVRAVFERWLDWHPDTSAWDAYINFEARYEEKENVRTIFKKYVHEFPNAGTWYKWIKYEMENNRDDVNTVRAVFESAVDTLLSNKSEENDDDEEFATIISSWTSWEVSCGEASRANEIFKLLLDNKTNKLEISDQTKSSIYTAFVEFEKNFGNKDSIEQSVLIKRRIKYEQEIQNDPYDYDSWWKYMTLLQNSSNKSDLENAFKKVTGNVVHDKHKSIKWRRYIMFWIWYAFWEEMTNNNPVSAREIWNNCLKVIPHKSFTFAKVWIGYSEFELRNSEDGLAKARKILGRAIGQTSINKPKIKIFKYYIDLEKKLGDWNRVRLLFQKWLEVSLLTTSSSELVIEKYVEFESSIEEYDRCDSILSSARQLSENPEYSSSFNLQRLLEITVEFYKEEMQYDKIREIYRALLDKDPNAHNWISFALFESSIPSAEQLEEYLQGDNEEFEATVDESQIESTRNIFEEAMTYFKDKDDKESRLVIIEAWRDFEEVNGSDESLSKVTKRLPVIVRKRRTVGSIEEEYIDYIFPDDESKKLPGKMSKFLANAKKWAQQN.

HAT repeat units follow at residues 43 to 75 (SYQQTKRKEFEQHINKNRLNLGQWTRYAKWEIE), 78 to 110 (HDFPRARSILERALDVNIQHVPFWIQYIQLELS), 112 to 144 (KNINHARNLMERAINTLPRVNKLWFLYVQTEEM), 146 to 177 (KNYPMVRAVFERWLDWHPDTSAWDAYINFEAR), 179 to 210 (EEKENVRTIFKKYVHEFPNAGTWYKWIKYEME), 214 to 253 (DDVNTVRAVFESAVDTLLSNKSEENDDDEEFATIISSWTS), 266 to 299 (EIFKLLLDNKTNKLEISDQTKSSIYTAFVEFEKN), 309 to 341 (SVLIKRRIKYEQEIQNDPYDYDSWWKYMTLLQN), 343 to 378 (SNKSDLENAFKKVTGNVVHDKHKSIKWRRYIMFWIW), 388 to 424 (NNPVSAREIWNNCLKVIPHKSFTFAKVWIGYSEFELR), 545 to 576 (MQYDKIREIYRALLDKDPNAHNWISFALFESS), and 601 to 642 (SQIE…VNGS).

This sequence belongs to the crooked-neck family. As to quaternary structure, associated with the spliceosome.

The protein localises to the nucleus. Involved in pre-mRNA splicing and cell cycle progression. Required for the spliceosome assembly and initiation of the DNA replication. The polypeptide is Pre-mRNA-splicing factor CLF1 (CLF1) (Candida albicans (strain SC5314 / ATCC MYA-2876) (Yeast)).